We begin with the raw amino-acid sequence, 214 residues long: STS14 protein (214 aa).

Positions 1-19 are cleaved as a signal peptide; it reads MFVLSTAMACLVYIYIYIY. 3 consecutive repeat copies span residues 13 to 14, 15 to 16, and 17 to 18. The tract at residues 13–18 is 3 X 2 AA tandem repeats of Y-I; it reads YIYIYI. One can recognise an SCP domain in the interval 80–200; the sequence is LDAHNKARSE…YEGPATLTVC (121 aa).

It belongs to the CRISP family. As to expression, highly expressed in the stigma and stylar cortex throughout pistil development. Not expressed in other organs.

Its function is as follows. May protect the outer tissues of the pistil from pathogen attack. This chain is STS14 protein (STS14), found in Solanum tuberosum (Potato).